The sequence spans 667 residues: Alpha-1,4-glucan:maltose-1-phosphate maltosyltransferase (667 aa).

K261, Q321, and D356 together coordinate alpha-maltose 1-phosphate. Catalysis depends on D392, which acts as the Nucleophile. Residue N393 coordinates alpha-maltose 1-phosphate. Residue E421 is the Proton donor of the active site. Residue 534–535 coordinates alpha-maltose 1-phosphate; that stretch reads KY.

Belongs to the glycosyl hydrolase 13 family. GlgE subfamily. As to quaternary structure, homodimer.

It catalyses the reaction alpha-maltose 1-phosphate + [(1-&gt;4)-alpha-D-glucosyl](n) = [(1-&gt;4)-alpha-D-glucosyl](n+2) + phosphate. Maltosyltransferase that uses maltose 1-phosphate (M1P) as the sugar donor to elongate linear or branched alpha-(1-&gt;4)-glucans. Is involved in a branched alpha-glucan biosynthetic pathway from trehalose, together with TreS, Mak and GlgB. This chain is Alpha-1,4-glucan:maltose-1-phosphate maltosyltransferase, found in Methylacidiphilum infernorum (isolate V4) (Methylokorus infernorum (strain V4)).